Consider the following 140-residue polypeptide: Nucleoside diphosphate kinase (140 aa).

6 residues coordinate ATP: lysine 11, phenylalanine 59, arginine 87, threonine 93, arginine 104, and asparagine 114. Histidine 117 (pros-phosphohistidine intermediate) is an active-site residue.

Belongs to the NDK family. In terms of assembly, homotetramer. Requires Mg(2+) as cofactor.

It is found in the cytoplasm. The enzyme catalyses a 2'-deoxyribonucleoside 5'-diphosphate + ATP = a 2'-deoxyribonucleoside 5'-triphosphate + ADP. It catalyses the reaction a ribonucleoside 5'-diphosphate + ATP = a ribonucleoside 5'-triphosphate + ADP. Functionally, major role in the synthesis of nucleoside triphosphates other than ATP. The ATP gamma phosphate is transferred to the NDP beta phosphate via a ping-pong mechanism, using a phosphorylated active-site intermediate. In Francisella tularensis subsp. mediasiatica (strain FSC147), this protein is Nucleoside diphosphate kinase.